The chain runs to 153 residues: SsrA-binding protein (153 aa).

Residues 132–153 (REKDWLRERERVMKHDTRRRSD) are disordered.

Belongs to the SmpB family.

Its subcellular location is the cytoplasm. In terms of biological role, required for rescue of stalled ribosomes mediated by trans-translation. Binds to transfer-messenger RNA (tmRNA), required for stable association of tmRNA with ribosomes. tmRNA and SmpB together mimic tRNA shape, replacing the anticodon stem-loop with SmpB. tmRNA is encoded by the ssrA gene; the 2 termini fold to resemble tRNA(Ala) and it encodes a 'tag peptide', a short internal open reading frame. During trans-translation Ala-aminoacylated tmRNA acts like a tRNA, entering the A-site of stalled ribosomes, displacing the stalled mRNA. The ribosome then switches to translate the ORF on the tmRNA; the nascent peptide is terminated with the 'tag peptide' encoded by the tmRNA and targeted for degradation. The ribosome is freed to recommence translation, which seems to be the essential function of trans-translation. This chain is SsrA-binding protein, found in Bordetella avium (strain 197N).